Here is a 355-residue protein sequence, read N- to C-terminus: Elongation factor Ts (355 aa).

The involved in Mg(2+) ion dislocation from EF-Tu stretch occupies residues 82–85 (TDFV).

The protein belongs to the EF-Ts family.

The protein resides in the cytoplasm. Associates with the EF-Tu.GDP complex and induces the exchange of GDP to GTP. It remains bound to the aminoacyl-tRNA.EF-Tu.GTP complex up to the GTP hydrolysis stage on the ribosome. This Helicobacter pylori (strain ATCC 700392 / 26695) (Campylobacter pylori) protein is Elongation factor Ts (tsf).